The chain runs to 264 residues: Phosphonoacetaldehyde hydrolase (264 aa).

Catalysis depends on D9, which acts as the Nucleophile. D9 and A11 together coordinate Mg(2+). Residue K50 is the Schiff-base intermediate with substrate of the active site. D183 is a binding site for Mg(2+).

Belongs to the HAD-like hydrolase superfamily. PhnX family. Homodimer. The cofactor is Mg(2+).

It carries out the reaction phosphonoacetaldehyde + H2O = acetaldehyde + phosphate + H(+). Its function is as follows. Involved in phosphonate degradation. This is Phosphonoacetaldehyde hydrolase from Bacillus cereus (strain AH187).